Here is a 187-residue protein sequence, read N- to C-terminus: Pyridoxal 5'-phosphate synthase subunit PdxT (187 aa).

47–49 (GES) lines the L-glutamine pocket. The active-site Nucleophile is Cys76. Residues Arg102 and 128–129 (IR) contribute to the L-glutamine site. Catalysis depends on charge relay system residues His165 and Glu167.

It belongs to the glutaminase PdxT/SNO family. As to quaternary structure, in the presence of PdxS, forms a dodecamer of heterodimers. Only shows activity in the heterodimer.

It catalyses the reaction aldehydo-D-ribose 5-phosphate + D-glyceraldehyde 3-phosphate + L-glutamine = pyridoxal 5'-phosphate + L-glutamate + phosphate + 3 H2O + H(+). The enzyme catalyses L-glutamine + H2O = L-glutamate + NH4(+). It functions in the pathway cofactor biosynthesis; pyridoxal 5'-phosphate biosynthesis. Its function is as follows. Catalyzes the hydrolysis of glutamine to glutamate and ammonia as part of the biosynthesis of pyridoxal 5'-phosphate. The resulting ammonia molecule is channeled to the active site of PdxS. In Methanococcus maripaludis (strain C7 / ATCC BAA-1331), this protein is Pyridoxal 5'-phosphate synthase subunit PdxT.